A 281-amino-acid polypeptide reads, in one-letter code: Elongation factor Ts (281 aa).

Residues 80–83 (TDFV) are involved in Mg(2+) ion dislocation from EF-Tu.

Belongs to the EF-Ts family.

The protein resides in the cytoplasm. Associates with the EF-Tu.GDP complex and induces the exchange of GDP to GTP. It remains bound to the aminoacyl-tRNA.EF-Tu.GTP complex up to the GTP hydrolysis stage on the ribosome. This is Elongation factor Ts from Vibrio atlanticus (strain LGP32) (Vibrio splendidus (strain Mel32)).